Consider the following 102-residue polypeptide: Inner membrane protein YaiY (102 aa).

The Cytoplasmic segment spans residues 1–24 (MADFTLSKSLFSGKYRNASSTPGN). A helical transmembrane segment spans residues 25-45 (IAYALFVLFCFWAGAQLLNLL). At 46 to 74 (VHAPGVYERLMQVQETGRPRVEIGLGVGT) the chain is on the periplasmic side. Residues 75-95 (IFGLIPFLVGCLIFAVVALWL) traverse the membrane as a helical segment. The Cytoplasmic segment spans residues 96–102 (HWRHRRQ).

It localises to the cell inner membrane. The polypeptide is Inner membrane protein YaiY (yaiY) (Escherichia coli O157:H7).